The following is a 240-amino-acid chain: UDP-2,3-diacylglucosamine hydrolase (240 aa).

The Mn(2+) site is built by D9, H11, D43, N81, and H116. Residue 81 to 82 coordinates substrate; it reads NR. Substrate-binding residues include D124, S162, K166, K169, and H197. Mn(2+) is bound by residues H197 and H199.

This sequence belongs to the LpxH family. Mn(2+) serves as cofactor.

Its subcellular location is the cell inner membrane. It catalyses the reaction UDP-2-N,3-O-bis[(3R)-3-hydroxytetradecanoyl]-alpha-D-glucosamine + H2O = 2-N,3-O-bis[(3R)-3-hydroxytetradecanoyl]-alpha-D-glucosaminyl 1-phosphate + UMP + 2 H(+). Its pathway is glycolipid biosynthesis; lipid IV(A) biosynthesis; lipid IV(A) from (3R)-3-hydroxytetradecanoyl-[acyl-carrier-protein] and UDP-N-acetyl-alpha-D-glucosamine: step 4/6. Its function is as follows. Hydrolyzes the pyrophosphate bond of UDP-2,3-diacylglucosamine to yield 2,3-diacylglucosamine 1-phosphate (lipid X) and UMP by catalyzing the attack of water at the alpha-P atom. Involved in the biosynthesis of lipid A, a phosphorylated glycolipid that anchors the lipopolysaccharide to the outer membrane of the cell. This chain is UDP-2,3-diacylglucosamine hydrolase, found in Neisseria meningitidis serogroup C / serotype 2a (strain ATCC 700532 / DSM 15464 / FAM18).